A 199-amino-acid chain; its full sequence is Extracellular superoxide dismutase [Cu-Zn] (199 aa).

An N-terminal signal peptide occupies residues Met-1–Thr-20. 3 N-linked (GlcNAc...) asparagine glycosylation sites follow: Asn-33, Asn-60, and Asn-70. Cu cation is bound by residues His-89, His-91, and His-106. Cys-100 and Cys-192 are joined by a disulfide. His-106 is a Zn(2+) binding site. The N-linked (GlcNAc...) asparagine glycan is linked to Asn-111. Zn(2+)-binding residues include His-114, His-123, and Asp-126. His-163 provides a ligand contact to Cu cation.

This sequence belongs to the Cu-Zn superoxide dismutase family. Homodimer. The cofactor is Cu cation. It depends on Zn(2+) as a cofactor.

The protein localises to the secreted. It is found in the extracellular space. The catalysed reaction is 2 superoxide + 2 H(+) = H2O2 + O2. In terms of biological role, protect the extracellular space from toxic effect of reactive oxygen intermediates by converting superoxide radicals into hydrogen peroxide and oxygen. May act in the parasite defense by neutralizing superoxide generated by activated leukocytes, thus acting as both an antioxidant and an anti-inflammatory factor. This Brugia pahangi (Filarial nematode worm) protein is Extracellular superoxide dismutase [Cu-Zn].